A 183-amino-acid chain; its full sequence is Apo-citrate lyase phosphoribosyl-dephospho-CoA transferase (183 aa).

The protein belongs to the CitX family.

It catalyses the reaction apo-[citrate lyase ACP] + 2'-(5''-triphospho-alpha-D-ribosyl)-3'-dephospho-CoA = holo-[citrate lyase ACP] + diphosphate. In terms of biological role, transfers 2-(5''-triphosphoribosyl)-3'-dephosphocoenzyme-A on a serine residue to the apo-acyl carrier protein (gamma chain) of the citrate lyase to yield holo-acyl carrier protein. This is Apo-citrate lyase phosphoribosyl-dephospho-CoA transferase from Escherichia coli (strain SMS-3-5 / SECEC).